A 524-amino-acid polypeptide reads, in one-letter code: Nucleobase-ascorbate transporter 2 (524 aa).

Transmembrane regions (helical) follow at residues 41–61 (YILALGTAVMIPSILVPMMGG), 69–89 (VVQTLLFLQGVNTLLQTLFGT), 91–111 (LPTVIGGSYAFMVPIISIIHD), 133–153 (GAIIVASSVQIILGFSQMWAI), 155–175 (SRFFSPIGMVPVIALTGFGLF), 179–199 (FPVVGNCVEIGLPMLILFVIF), 217–237 (FALIIALIIVWAYAHVLTASG), 282–302 (AFAMMAAVLVSLIESTGAFKA), 359–379 (RVIQISAGFMIFFSMLGKFGA), 380–400 (LFASIPFTIFAAVYCVLFGLV), 419–439 (LFIVGVSLFLGLSIPEYFRDF), and 457–477 (DFLNTIFLSSPMVALMVAVFL).

The protein belongs to the nucleobase:cation symporter-2 (NCS2) (TC 2.A.40) family. Expressed in cotyledons 10 days after imbibition (DAI). Expressed in the minor and major veins of cotyledons and leaves, in the shoot apex and pedicels. Expressed in the root meristems, root tips and lateral root primordia.

It localises to the membrane. The chain is Nucleobase-ascorbate transporter 2 (NAT2) from Arabidopsis thaliana (Mouse-ear cress).